We begin with the raw amino-acid sequence, 243 residues long: NAD-dependent protein deacetylase (243 aa).

The Deacetylase sirtuin-type domain occupies 1 to 243 (MRNDLETLKH…VSVVKSLMTE (243 aa)). NAD(+) is bound by residues A24, F35, R36, Q105, I107, D108, and H123. F35 contacts nicotinamide. Residues I107 and D108 each coordinate nicotinamide. Residue H123 is the Proton acceptor of the active site. Zn(2+)-binding residues include C131, C134, C151, and C154. Residues S192, S193, N215, and D232 each contribute to the NAD(+) site.

This sequence belongs to the sirtuin family. Class U subfamily. Zn(2+) is required as a cofactor.

Its subcellular location is the cytoplasm. The catalysed reaction is N(6)-acetyl-L-lysyl-[protein] + NAD(+) + H2O = 2''-O-acetyl-ADP-D-ribose + nicotinamide + L-lysyl-[protein]. In terms of biological role, NAD-dependent protein deacetylase which modulates the activities of several enzymes which are inactive in their acetylated form. This chain is NAD-dependent protein deacetylase, found in Staphylococcus aureus (strain MSSA476).